The sequence spans 238 residues: Urease accessory protein UreG (238 aa).

The span at 1 to 15 (MPPHLIDGEPHDHAH) shows a compositional bias: basic and acidic residues. The interval 1 to 27 (MPPHLIDGEPHDHAHDRPKRQRTPGEP) is disordered. Residue 34 to 41 (GPVGSGKT) coordinates GTP.

It belongs to the SIMIBI class G3E GTPase family. UreG subfamily. Homodimer. UreD, UreF and UreG form a complex that acts as a GTP-hydrolysis-dependent molecular chaperone, activating the urease apoprotein by helping to assemble the nickel containing metallocenter of UreC. The UreE protein probably delivers the nickel.

The protein resides in the cytoplasm. Facilitates the functional incorporation of the urease nickel metallocenter. This process requires GTP hydrolysis, probably effectuated by UreG. This Nocardia farcinica (strain IFM 10152) protein is Urease accessory protein UreG.